A 687-amino-acid chain; its full sequence is MTPEVLRQWQELAEQVREHQFRYYVRDAPVITDAEFDELLRRLEALEEQYPELRTPDSPTQLVGGAGFATEFEPVEHLERMLSLDNAFNTEELTAWAGRIHADVGDSAAYLCELKIDGVALSLVYEGGRLTRASTRGDGRTGEDVTLNARTIEDVPERLSHSEDHRMPEVLEVRGEVFFRVADFQALNASLVEEGKAPFANPRNSAAGSLRQKDPAVTARRRLRMICHGLGHTEGFRPATLHQAYLALQAWGLPVSQHTTLVADLAGVQERIDYWGEHRHEVDHEIDGVVVKVDDVALQRRLGSTSRAPRWAIAYKYPPEEAQTKLLDIRVNVGRTGRVTPFAFMTPVKVAGSTVAQATLHNASEVKRKGVLIGDTVVIRKAGDVIPEVLGPVVDLRDGSEREFVMPTTCPECGTPLAPEKEGDADIRCPNTRSCPGQLRERVFHVSSRNALDIEMLGYEAGAALLSARVIGDEGDLFGLTEEELLRTDLFRTKAGDLSANGRRLLANLDKAKAAPLWRVLVALSIRHVGPTAARALATEFGSIDAIVSATTEQLAAVEGVGPTIASAVSEWFTVDWHREIVEKWRAAGVRMADERDDSVPRTLAGVTVVVTGSLPGFSRDEAKEAIVTRGGKAAGSVSKKTSYVVAGDAPGSKYDKAVELGVPILDEDGFRKLLEQGPPAEVGEPT.

Residues 33–37 (DAEFD), 83–84 (SL), and Glu113 contribute to the NAD(+) site. Lys115 (N6-AMP-lysine intermediate) is an active-site residue. Arg136, Glu176, Lys292, and Lys316 together coordinate NAD(+). The Zn(2+) site is built by Cys410, Cys413, Cys429, and Cys435. Positions 599–687 (SVPRTLAGVT…GPPAEVGEPT (89 aa)) constitute a BRCT domain.

This sequence belongs to the NAD-dependent DNA ligase family. LigA subfamily. Requires Mg(2+) as cofactor. Mn(2+) is required as a cofactor.

The catalysed reaction is NAD(+) + (deoxyribonucleotide)n-3'-hydroxyl + 5'-phospho-(deoxyribonucleotide)m = (deoxyribonucleotide)n+m + AMP + beta-nicotinamide D-nucleotide.. Its function is as follows. DNA ligase that catalyzes the formation of phosphodiester linkages between 5'-phosphoryl and 3'-hydroxyl groups in double-stranded DNA using NAD as a coenzyme and as the energy source for the reaction. It is essential for DNA replication and repair of damaged DNA. This is DNA ligase from Mycobacterium marinum (strain ATCC BAA-535 / M).